The chain runs to 514 residues: Na(+)/H(+) antiporter NhaB (514 aa).

The next 12 membrane-spanning stretches (helical) occupy residues 23 to 43 (LALL…PFVA), 63 to 83 (PLLP…TSAA), 97 to 117 (LLLM…LFIF), 120 to 140 (LLLS…AAAF), 144 to 164 (FLDA…FYGI), 202 to 222 (LMMH…VGEP), 238 to 258 (FFLR…LTCM), 303 to 323 (AVIG…VGLI), 357 to 377 (LTVF…APII), 391 to 411 (LFYL…VGTI), 447 to 467 (ATPN…APLI), and 475 to 495 (VWMA…CVEF).

This sequence belongs to the NhaB Na(+)/H(+) (TC 2.A.34) antiporter family.

Its subcellular location is the cell inner membrane. It carries out the reaction 2 Na(+)(in) + 3 H(+)(out) = 2 Na(+)(out) + 3 H(+)(in). Functionally, na(+)/H(+) antiporter that extrudes sodium in exchange for external protons. The sequence is that of Na(+)/H(+) antiporter NhaB from Salmonella paratyphi A (strain ATCC 9150 / SARB42).